The following is a 151-amino-acid chain: Putative pre-16S rRNA nuclease (151 aa).

This sequence belongs to the YqgF nuclease family.

It localises to the cytoplasm. In terms of biological role, could be a nuclease involved in processing of the 5'-end of pre-16S rRNA. In Nostoc sp. (strain PCC 7120 / SAG 25.82 / UTEX 2576), this protein is Putative pre-16S rRNA nuclease.